A 345-amino-acid chain; its full sequence is Serine/threonine-protein kinase US3 homolog (345 aa).

Residues 49–334 enclose the Protein kinase domain; the sequence is FSVLETFTPG…KALLDFAAFY (286 aa). ATP-binding positions include 55 to 63 and Lys-78; that span reads FTPGAEGFT. The active-site Proton acceptor is Asp-162.

The protein belongs to the protein kinase superfamily. Ser/Thr protein kinase family. Phosphorylated by UL13 homolog; this phosphorylation regulates subsequent phosphorylation of UL31 and UL34 homologs by US3. Autophosphorylated.

Its subcellular location is the host cytoplasm. The protein localises to the host nucleus. The enzyme catalyses L-seryl-[protein] + ATP = O-phospho-L-seryl-[protein] + ADP + H(+). The catalysed reaction is L-threonyl-[protein] + ATP = O-phospho-L-threonyl-[protein] + ADP + H(+). Functionally, multifunctional serine/threonine kinase that plays a role in several processes including egress of virus particles from the nucleus, modulation of the actin cytoskeleton and inhibition of apoptosis. Phosphorylates UL31 and UL34 homologs, two critical regulators of capsid budding from nucleus to endoplasmic reticulum, thereby facilitating virion egress. Modulates and redistributes host components of the nuclear envelope, including LMNA, emerin/EMD and the nuclear matrix protein MATR3. Phosphorylates envelope glycoprotein B (gB), probably to direct it to the cell surface. Promotes virus intracellular spread by restructuring host cell cytoskeleton. Blocks host apoptosis to extend cell survival and allow efficient viral replication. Promotes viral gene expression by phosphorylating host HDAC2 to reduce viral genome silencing. This is Serine/threonine-protein kinase US3 homolog (US2) from Chlorocebus aethiops (Green monkey).